The chain runs to 1137 residues: Calcium-activated potassium channel subunit alpha-1 (1137 aa).

At 1-44 the chain is on the extracellular side; sequence MSNNINANNLNTDSSSSPVNVPKMDALIIPVTMEVPCDSRGQRM. A helical transmembrane segment spans residues 45 to 65; sequence WWAFLASSMVTFFGGLFIILL. At 66–137 the chain is on the cytoplasmic side; it reads WRTLKYLWTV…MISAQTLTGR (72 aa). The chain crosses the membrane as a helical span at residues 138-158; it reads VLVVLVFALSIGALVIYFIDS. At 159–173 the chain is on the extracellular side; sequence SNPIESCQNFYKDFT. The chain crosses the membrane as a helical span at residues 174–194; that stretch reads LQIDMAFNVFFLLYFGLRFIA. Residues 195–198 are Cytoplasmic-facing; the sequence is ANDK. The chain crosses the membrane as a helical span at residues 199 to 219; the sequence is LWFWLEVNSVVDFFTVPPVFV. Residues 220-223 lie on the Extracellular side of the membrane; that stretch reads SVYL. The helical; Voltage-sensor transmembrane segment at 224–244 threads the bilayer; it reads NRSWLGLRFLRALRLIQFSEI. Topologically, residues 245–259 are cytoplasmic; the sequence is LQFLNILKTSNSIKL. Residues 260-280 traverse the membrane as a helical segment; the sequence is VNLCSIFISTWLTAAGFIHLV. The Extracellular segment spans residues 281 to 294; it reads ENSGDPWENFQNNQ. Positions 295–317 form an intramembrane region, pore-forming; that stretch reads QLTYWECVYLLMVTMSTVGYGDV. Residues 311-314 carry the Selectivity for potassium motif; sequence TVGY. At 318–326 the chain is on the extracellular side; that stretch reads YAKTTLGRL. A helical membrane pass occupies residues 327-347; sequence FMVFFILGGLAMFASYVPEII. Over 348-1137 the chain is Cytoplasmic; it reads ELIGNRKKYG…KQKYVQEDRL (790 aa). An RCK N-terminal 1 domain is found at 366 to 508; sequence RKHIVVCGHI…WNWKEGDDAI (143 aa). Mg(2+) contacts are provided by E398, Q421, and E423. The segment at 515–535 is segment S7; it reads LGFIAQSCLAPGLSTMLANLF. The interval 572 to 592 is segment S8; that stretch reads LSFPAVCELVFAKLKLLMIAI. The heme-binding motif stretch occupies residues 636–640; it reads CKACH. Residues 660-688 form a disordered region; it reads EQPSTLSPKKKQRNGGMRNSPNSSPKLMR. The segment at 738–758 is segment S9; sequence VLSGHVVVCIFGDVKSALIGL. In terms of domain architecture, RCK N-terminal 2 spans 740 to 884; that stretch reads SGHVVVCIFG…MDRSSPDNSP (145 aa). Positions 904-926 match the Calcium bowl motif; it reads TELVNDSNVQFLDQDDDDDPDTE. Residues Q913, D916, D919, and D921 each contribute to the Ca(2+) site. The segment S10 stretch occupies residues 933-953; it reads FACGTAFAVSVLDSLMSATYF. Positions 1088 to 1112 are enriched in low complexity; it reads ASLSHSSHSSYSSSKKSSSVHSIPS. Residues 1088 to 1137 are disordered; it reads ASLSHSSHSSYSSSKKSSSVHSIPSTANRPNRTKTRDSREKQKYVQEDRL. Over residues 1121–1137 the composition is skewed to basic and acidic residues; sequence KTRDSREKQKYVQEDRL.

This sequence belongs to the potassium channel family. Calcium-activated (TC 1.A.1.3) subfamily. KCa1.1/KCNMA1 sub-subfamily. In terms of assembly, homotetramer; which constitutes the calcium-activated potassium channel.

The protein localises to the cell membrane. The enzyme catalyses K(+)(in) = K(+)(out). Ethanol and carbon monoxide-bound heme increase channel activation. Heme inhibits channel activation. Potassium channel activated by both membrane depolarization or increase in cytosolic Ca(2+) that mediates export of K(+). It is also activated by the concentration of cytosolic Mg(2+). Its activation dampens the excitatory events that elevate the cytosolic Ca(2+) concentration and/or depolarize the cell membrane. It therefore contributes to repolarization of the membrane potential. Plays a key role in controlling excitability in a number of systems, such as regulation of the contraction of smooth muscle, the tuning of hair cells in the cochlea, regulation of transmitter release, and innate immunity. In smooth muscles, its activation by high level of Ca(2+), caused by ryanodine receptors in the sarcoplasmic reticulum, regulates the membrane potential. In cochlea cells, its number and kinetic properties partly determine the characteristic frequency of each hair cell and thereby helps to establish a tonotopic map. Highly sensitive to both iberiotoxin (IbTx) and charybdotoxin (CTX). This Gallus gallus (Chicken) protein is Calcium-activated potassium channel subunit alpha-1 (KCNMA1).